Here is a 190-residue protein sequence, read N- to C-terminus: Elongation factor P-like protein (190 aa).

This sequence belongs to the elongation factor P family.

This chain is Elongation factor P-like protein, found in Pseudoalteromonas atlantica (strain T6c / ATCC BAA-1087).